The sequence spans 218 residues: Carboxylesterase 2 (218 aa).

Catalysis depends on charge relay system residues S114, D168, and H199.

Belongs to the AB hydrolase superfamily. AB hydrolase 2 family. Homodimer.

The catalysed reaction is a carboxylic ester + H2O = an alcohol + a carboxylate + H(+). In terms of biological role, hydrolyzes carboxylic ester bonds with relatively broad substrate specificity. In Pseudomonas fluorescens, this protein is Carboxylesterase 2 (estB).